The chain runs to 223 residues: Glutathione S-transferase 4 (223 aa).

Ala-2 carries the post-translational modification Blocked amino end (Ala). The 82-residue stretch at 4–85 folds into the GST N-terminal domain; it reads PAVKVYGWAI…HVLRKHKPEL (82 aa). Glutathione-binding positions include Ser-14, 43–44, 56–57, and 69–70; these read HR, KV, and ES. The 134-residue stretch at 90-223 folds into the GST C-terminal domain; the sequence is RLEQTAMVDV…VGAGAPKEQE (134 aa).

Belongs to the GST superfamily. Phi family. Homodimer or heterodimer of GST-I and GST-IV (=GST-II). Seedling roots.

The catalysed reaction is RX + glutathione = an S-substituted glutathione + a halide anion + H(+). Its function is as follows. Conjugation of reduced glutathione to a wide number of exogenous and endogenous hydrophobic electrophiles. Involved in the detoxification of certain herbicides. Most active with substrates possessing a chloroacetamide structure. Trans-cinnamic acid and 1-chloro-2,4-dinitrobenzene are not effective substrates. May play an important role in the benoxacor-mediated protection of maize from metolachlor injury. This Zea mays (Maize) protein is Glutathione S-transferase 4 (GST4).